A 403-amino-acid chain; its full sequence is S-adenosylmethionine synthase (403 aa).

ATP is bound at residue His-17. Asp-19 serves as a coordination point for Mg(2+). Glu-45 provides a ligand contact to K(+). L-methionine contacts are provided by Glu-58 and Gln-104. Residues 104-114 are flexible loop; it reads QSPDIAQGVDT. ATP is bound by residues 179-181, 250-251, Asp-259, 265-266, Ala-282, and Lys-286; these read DGK, KF, and RK. Asp-259 is a binding site for L-methionine. Lys-290 serves as a coordination point for L-methionine.

This sequence belongs to the AdoMet synthase family. Homotetramer; dimer of dimers. It depends on Mg(2+) as a cofactor. Requires K(+) as cofactor.

The protein resides in the cytoplasm. It catalyses the reaction L-methionine + ATP + H2O = S-adenosyl-L-methionine + phosphate + diphosphate. It participates in amino-acid biosynthesis; S-adenosyl-L-methionine biosynthesis; S-adenosyl-L-methionine from L-methionine: step 1/1. In terms of biological role, catalyzes the formation of S-adenosylmethionine (AdoMet) from methionine and ATP. The overall synthetic reaction is composed of two sequential steps, AdoMet formation and the subsequent tripolyphosphate hydrolysis which occurs prior to release of AdoMet from the enzyme. In Mycobacterium avium (strain 104), this protein is S-adenosylmethionine synthase.